Reading from the N-terminus, the 120-residue chain is uncharacterized protein (120 aa).

This sequence belongs to the HesB/IscA family.

This is an uncharacterized protein from Bacillus subtilis (strain 168).